The sequence spans 340 residues: Phosphate acyltransferase (340 aa).

It belongs to the PlsX family. As to quaternary structure, homodimer. Probably interacts with PlsY.

The protein localises to the cytoplasm. It carries out the reaction a fatty acyl-[ACP] + phosphate = an acyl phosphate + holo-[ACP]. The protein operates within lipid metabolism; phospholipid metabolism. In terms of biological role, catalyzes the reversible formation of acyl-phosphate (acyl-PO(4)) from acyl-[acyl-carrier-protein] (acyl-ACP). This enzyme utilizes acyl-ACP as fatty acyl donor, but not acyl-CoA. The chain is Phosphate acyltransferase from Leptospira biflexa serovar Patoc (strain Patoc 1 / ATCC 23582 / Paris).